The following is a 426-amino-acid chain: Methylamine dehydrogenase heavy chain (426 aa).

A signal peptide spans 1–31 (MASARESTPRYLTLIGATLACSALALGAAQA). The tract at residues 32 to 64 (QTEPAEPEAPAETAAADAAGQTEGQRGAAEAAA) is disordered. C221 and C236 are disulfide-bonded.

The protein belongs to the aromatic amine dehydrogenase heavy chain family. Tetramer of two light and two heavy chains.

It is found in the periplasm. The catalysed reaction is 2 oxidized [amicyanin] + methylamine + H2O = 2 reduced [amicyanin] + formaldehyde + NH4(+) + 2 H(+). Functionally, methylamine dehydrogenase carries out the oxidation of methylamine. Electrons are passed from methylamine dehydrogenase to amicyanin. This is Methylamine dehydrogenase heavy chain (mauB) from Paracoccus versutus (Thiobacillus versutus).